The chain runs to 320 residues: Acyl-coenzyme A thioesterase 8 (320 aa).

Active-site charge relay system residues include Asp233, Ser255, and Gln305. The Microbody targeting signal motif lies at 318–320 (SKL).

Belongs to the C/M/P thioester hydrolase family. Homodimer.

It localises to the peroxisome matrix. The enzyme catalyses choloyl-CoA + H2O = cholate + CoA + H(+). It catalyses the reaction chenodeoxycholoyl-CoA + H2O = chenodeoxycholate + CoA + H(+). It carries out the reaction acetyl-CoA + H2O = acetate + CoA + H(+). The catalysed reaction is butanoyl-CoA + H2O = butanoate + CoA + H(+). The enzyme catalyses hexanoyl-CoA + H2O = hexanoate + CoA + H(+). It catalyses the reaction octanoyl-CoA + H2O = octanoate + CoA + H(+). It carries out the reaction decanoyl-CoA + H2O = decanoate + CoA + H(+). The catalysed reaction is dodecanoyl-CoA + H2O = dodecanoate + CoA + H(+). The enzyme catalyses tetradecanoyl-CoA + H2O = tetradecanoate + CoA + H(+). It catalyses the reaction 4,8-dimethylnonanoyl-CoA + H2O = 4,8-dimethylnonanoate + CoA + H(+). It carries out the reaction 2,6-dimethylheptanoyl-CoA + H2O = 2,6-dimethylheptanoate + CoA + H(+). The catalysed reaction is malonyl-CoA + H2O = malonate + CoA + H(+). The enzyme catalyses acetoacetyl-CoA + H2O = acetoacetate + CoA + H(+). It catalyses the reaction propanoyl-CoA + H2O = propanoate + CoA + H(+). It carries out the reaction succinyl-CoA + H2O = succinate + CoA + H(+). The catalysed reaction is glutaryl-CoA + H2O = glutarate + CoA + H(+). The enzyme catalyses hexanedioyl-CoA + H2O = hexanedioate + CoA + H(+). It catalyses the reaction octanedioyl-CoA + H2O = octanedioate + CoA + H(+). It carries out the reaction decanedioyl-CoA + H2O = decanedioate + CoA + H(+). The catalysed reaction is dodecanedioyl-CoA + H2O = dodecanedioate + CoA + H(+). The enzyme catalyses (9Z)-tetradecenoyl-CoA + H2O = (9Z)-tetradecenoate + CoA + H(+). It catalyses the reaction hexadecanoyl-CoA + H2O = hexadecanoate + CoA + H(+). It carries out the reaction (9Z)-hexadecenoyl-CoA + H2O = (9Z)-hexadecenoate + CoA + H(+). The catalysed reaction is octadecanoyl-CoA + H2O = octadecanoate + CoA + H(+). The enzyme catalyses (9Z)-octadecenoyl-CoA + H2O = (9Z)-octadecenoate + CoA + H(+). It catalyses the reaction (9Z,12Z)-octadecadienoyl-CoA + H2O = (9Z,12Z)-octadecadienoate + CoA + H(+). It carries out the reaction eicosanoyl-CoA + H2O = eicosanoate + CoA + H(+). The catalysed reaction is (5Z,8Z,11Z,14Z)-eicosatetraenoyl-CoA + H2O = (5Z,8Z,11Z,14Z)-eicosatetraenoate + CoA + H(+). The enzyme catalyses (3S)-3-hydroxy-3-methylglutaryl-CoA + H2O = 3-hydroxy-3-methylglutarate + CoA + H(+). It catalyses the reaction 3alpha,7alpha,12alpha-trihydroxy-5beta-cholestan-26-oyl-CoA + H2O = 3alpha,7alpha,12alpha-trihydroxy-5beta-cholestan-26-oate + CoA + H(+). It carries out the reaction 2-methyloctadecanoyl-CoA + H2O = 2-methyloctadecanoate + CoA + H(+). The catalysed reaction is prostaglandin F2alpha-CoA + H2O = prostaglandin F2alpha + CoA + H(+). Inhibited by CoASH (IC(50)=10-15 uM). Also inhibited by cysteine-reactive agents. Functionally, catalyzes the hydrolysis of acyl-CoAs into free fatty acids and coenzyme A (CoASH), regulating their respective intracellular levels. Displays no strong substrate specificity with respect to the carboxylic acid moiety of Acyl-CoAs. Hydrolyzes medium length (C2 to C20) straight-chain, saturated and unsaturated acyl-CoAS but is inactive towards substrates with longer aliphatic chains. Moreover, it catalyzes the hydrolysis of CoA esters of bile acids, such as choloyl-CoA and chenodeoxycholoyl-CoA and competes with bile acid CoA:amino acid N-acyltransferase (BAAT). Is also able to hydrolyze CoA esters of dicarboxylic acids. It is involved in the metabolic regulation of peroxisome proliferation. This Rattus norvegicus (Rat) protein is Acyl-coenzyme A thioesterase 8 (Acot8).